Consider the following 876-residue polypeptide: Vacuolar protein sorting-associated protein 39 homolog (876 aa).

A CNH domain is found at 14-310; the sequence is GVQIESIAAY…KFLVHADKGT (297 aa). The CHCR repeat unit spans residues 578–741; it reads ELIEVESLPR…ILIPPTQPLY (164 aa).

The protein belongs to the VAM6/VPS39 family. As to quaternary structure, part of the homotypic fusion and vacuole protein sorting (HOPS) complex, composed of Vps16A, car/Vps33A, dor/Vps18, Vps39, Vps11 and lt/Vps41. Interacts with Rab2 (GTP-bound form); the interaction is probably direct.

Its subcellular location is the cytoplasm. It is found in the lysosome membrane. The protein resides in the late endosome membrane. The protein localises to the late endosome. It localises to the lysosome. Functionally, part of the homotypic fusion and vacuole protein sorting (HOPS) tethering complex involved in endo-lysosomal vesicle trafficking and lysosome biogenesis. The HOPS complex facilitates docking and fusion of lysosomes with late endosomes and several other types of vesicles. The HOPS complex is also involved in autophagy and crinophagy (the elimination of unused secretory granules through their fusion with lysosomes). The HOPS complex mediates autophagocitic flux, probably by binding autophagosome-associated Syx17/syntaxin 17, promoting assembly of the trans-SNARE complex and instigating autophagosome-lysosome fusion. Independent of Syx17/syntaxin 17, HOPS is involved in biosynthetic transport to lysosomes and lysosome-related organelles such as eye-pigment granules. Required for autophagocytosis-dependent remodeling of myofibrils and transverse-tubules (T-tubules) during metamorphosis. The polypeptide is Vacuolar protein sorting-associated protein 39 homolog (Drosophila melanogaster (Fruit fly)).